The sequence spans 152 residues: Acidic phospholipase A2 S16-19 (152 aa).

The N-terminal stretch at 1 to 19 (MYPAHLLVLLAVCVSLLGA) is a signal peptide. The propeptide occupies 20–27 (SNIPLPSL). 6 disulfides stabilise this stretch: cysteine 38–cysteine 104, cysteine 54–cysteine 151, cysteine 71–cysteine 132, cysteine 78–cysteine 125, cysteine 88–cysteine 118, and cysteine 111–cysteine 123. Positions 55, 57, and 59 each coordinate Ca(2+). Histidine 75 is a catalytic residue. Residue aspartate 76 coordinates Ca(2+). Aspartate 126 is an active-site residue.

The protein belongs to the phospholipase A2 family. Group I subfamily. D49 sub-subfamily. The cofactor is Ca(2+). In terms of processing, this enzyme lacks one of the seven disulfide bonds found in similar PLA2 proteins. In terms of tissue distribution, expressed by the venom gland.

The protein localises to the secreted. The enzyme catalyses a 1,2-diacyl-sn-glycero-3-phosphocholine + H2O = a 1-acyl-sn-glycero-3-phosphocholine + a fatty acid + H(+). Its function is as follows. Snake venom phospholipase A2 (PLA2) that inhibits collagen-induced platelet aggregation. PLA2 catalyzes the calcium-dependent hydrolysis of the 2-acyl groups in 3-sn-phosphoglycerides. The protein is Acidic phospholipase A2 S16-19 of Austrelaps superbus (Lowland copperhead snake).